The chain runs to 452 residues: Trigger factor (452 aa).

Residues 170 to 256 (DSIVKVDFVE…IKSIKKRDLP (87 aa)) form the PPIase FKBP-type domain.

It belongs to the FKBP-type PPIase family. Tig subfamily.

It is found in the cytoplasm. It carries out the reaction [protein]-peptidylproline (omega=180) = [protein]-peptidylproline (omega=0). In terms of biological role, involved in protein export. Acts as a chaperone by maintaining the newly synthesized protein in an open conformation. Functions as a peptidyl-prolyl cis-trans isomerase. This Borreliella afzelii (strain PKo) (Borrelia afzelii) protein is Trigger factor.